A 91-amino-acid chain; its full sequence is Sec-independent protein translocase protein TatA (91 aa).

A helical membrane pass occupies residues 3-23 (FFGIGLPEMLVILAIALLVFG). The interval 57–91 (DRTPATPAEATVEPPVLDSAPTEAVTVEKQTETQV) is disordered. Residues 59-72 (TPATPAEATVEPPV) show a composition bias toward low complexity.

It belongs to the TatA/E family. As to quaternary structure, forms a complex with TatC.

The protein resides in the cell inner membrane. Part of the twin-arginine translocation (Tat) system that transports large folded proteins containing a characteristic twin-arginine motif in their signal peptide across membranes. TatA could form the protein-conducting channel of the Tat system. This Synechococcus elongatus (strain ATCC 33912 / PCC 7942 / FACHB-805) (Anacystis nidulans R2) protein is Sec-independent protein translocase protein TatA.